Here is a 381-residue protein sequence, read N- to C-terminus: MSLNLFWFLPTHGDGHYLGSDAGARPVDHGYLQQIAQAADRLGFTGVLIPTGRSCEDAWLVAASMIPVTQRLKFLVALRPSVVSPTVAARQAATLDRLSNGRALFNLVTGSDPQELAGDGVFLDHTARYEASAEFTRVWRRLLEGEKVDFEGKHIKVRGAQLLFPPVQQPRPPLYFGGSSDVAQDLAAEQVDLYLTWGEPPEQVKEKIAQVRAKAAAHGRTVRFGIRLHVIVRETTEEAWQAADRLIAHLDDETIAKAQAAFARQDSVGQQRMAALHGGRRDQLEISPNLWAGVGLVRGGAGTALVGDGPTVAARINEYAALGIDSFILSGYPHLEEAYRVGEFLFPHLDVAIPDVPQPRPLTAQGEAVANEFIPRRVAQS.

This sequence belongs to the SsuD family. As to quaternary structure, homotetramer.

It carries out the reaction an alkanesulfonate + FMNH2 + O2 = an aldehyde + FMN + sulfite + H2O + 2 H(+). Its function is as follows. Catalyzes the desulfonation of aliphatic sulfonates. In Cronobacter sakazakii (strain ATCC BAA-894) (Enterobacter sakazakii), this protein is Alkanesulfonate monooxygenase.